The primary structure comprises 254 residues: Phosphoribosylaminoimidazole-succinocarboxamide synthase (254 aa).

The protein belongs to the SAICAR synthetase family.

The catalysed reaction is 5-amino-1-(5-phospho-D-ribosyl)imidazole-4-carboxylate + L-aspartate + ATP = (2S)-2-[5-amino-1-(5-phospho-beta-D-ribosyl)imidazole-4-carboxamido]succinate + ADP + phosphate + 2 H(+). The protein operates within purine metabolism; IMP biosynthesis via de novo pathway; 5-amino-1-(5-phospho-D-ribosyl)imidazole-4-carboxamide from 5-amino-1-(5-phospho-D-ribosyl)imidazole-4-carboxylate: step 1/2. The sequence is that of Phosphoribosylaminoimidazole-succinocarboxamide synthase from Rhizobium meliloti (strain 1021) (Ensifer meliloti).